The following is a 268-amino-acid chain: Tryptophan synthase alpha chain (268 aa).

Active-site proton acceptor residues include glutamate 49 and aspartate 60.

The protein belongs to the TrpA family. Tetramer of two alpha and two beta chains.

It catalyses the reaction (1S,2R)-1-C-(indol-3-yl)glycerol 3-phosphate + L-serine = D-glyceraldehyde 3-phosphate + L-tryptophan + H2O. Its pathway is amino-acid biosynthesis; L-tryptophan biosynthesis; L-tryptophan from chorismate: step 5/5. Its function is as follows. The alpha subunit is responsible for the aldol cleavage of indoleglycerol phosphate to indole and glyceraldehyde 3-phosphate. The sequence is that of Tryptophan synthase alpha chain from Escherichia coli (strain 55989 / EAEC).